A 583-amino-acid chain; its full sequence is Isocitrate dehydrogenase kinase/phosphatase (583 aa).

ATP-binding positions include 315–321 (APGIRGM) and lysine 336. The active site involves aspartate 371.

This sequence belongs to the AceK family.

It is found in the cytoplasm. It catalyses the reaction L-seryl-[isocitrate dehydrogenase] + ATP = O-phospho-L-seryl-[isocitrate dehydrogenase] + ADP + H(+). In terms of biological role, bifunctional enzyme which can phosphorylate or dephosphorylate isocitrate dehydrogenase (IDH) on a specific serine residue. This is a regulatory mechanism which enables bacteria to bypass the Krebs cycle via the glyoxylate shunt in response to the source of carbon. When bacteria are grown on glucose, IDH is fully active and unphosphorylated, but when grown on acetate or ethanol, the activity of IDH declines drastically concomitant with its phosphorylation. This chain is Isocitrate dehydrogenase kinase/phosphatase, found in Salmonella paratyphi C (strain RKS4594).